Consider the following 167-residue polypeptide: Glutathione peroxidase 1 (167 aa).

Cys41 is a catalytic residue.

The protein belongs to the glutathione peroxidase family.

The enzyme catalyses 2 glutathione + H2O2 = glutathione disulfide + 2 H2O. In terms of biological role, may constitute a glutathione peroxidase-like protective system against oxidative stresses. The polypeptide is Glutathione peroxidase 1 (GPXHA-1) (Helianthus annuus (Common sunflower)).